The sequence spans 122 residues: C-C motif chemokine 9 (122 aa).

The first 21 residues, 1–21, serve as a signal peptide directing secretion; that stretch reads MKPFHTALSFLILTTALGIWA. Cystine bridges form between C57-C80, C58-C96, and C67-C107.

The protein belongs to the intercrine beta (chemokine CC) family. The N-terminal is proteolytically cleaved by proteases associated with inflammatory responses. The processed forms CCL9(29-101), CCL9(30-101) and CCL9(31-101) exhibit increase in CCR1-mediated signaling and chemotaxis assays in vitro. As to expression, expressed mainly in the liver, lung, and the thymus, although some expression has been detected in a wide variety of tissues except brain.

Its subcellular location is the secreted. Functionally, monokine with inflammatory, pyrogenic and chemokinetic properties. Circulates at high concentrations in the blood of healthy animals. Binding to a high-affinity receptor activates calcium release in neutrophils. It also inhibits colony formation of bone marrow myeloid immature progenitors. The sequence is that of C-C motif chemokine 9 (Ccl9) from Mus musculus (Mouse).